The following is a 240-amino-acid chain: Uridylate kinase (240 aa).

13 to 16 is an ATP binding site; it reads KASG. The interval 21–26 is involved in allosteric activation by GTP; it reads GGQGFG. Glycine 55 is a UMP binding site. Positions 56 and 60 each coordinate ATP. UMP contacts are provided by residues aspartate 75 and 136 to 143; that span reads TGNPFFTT. Threonine 163, glutamine 164, tyrosine 169, and aspartate 172 together coordinate ATP.

Belongs to the UMP kinase family. In terms of assembly, homohexamer.

The protein resides in the cytoplasm. It carries out the reaction UMP + ATP = UDP + ADP. It functions in the pathway pyrimidine metabolism; CTP biosynthesis via de novo pathway; UDP from UMP (UMPK route): step 1/1. With respect to regulation, allosterically activated by GTP. Inhibited by UTP. Its function is as follows. Catalyzes the reversible phosphorylation of UMP to UDP. This is Uridylate kinase from Rhizobium johnstonii (strain DSM 114642 / LMG 32736 / 3841) (Rhizobium leguminosarum bv. viciae).